The chain runs to 383 residues: WD repeat-containing protein 55 (383 aa).

A compositionally biased stretch (basic and acidic residues) spans 1–11 (MDRTCEERPAE). Residues 1-33 (MDRTCEERPAEDGSDEEDPDSMEAPTRIRDTPE) are disordered. Over residues 12–21 (DGSDEEDPDS) the composition is skewed to acidic residues. Phosphoserine is present on serine 14. WD repeat units lie at residues 36–75 (VLEA…GETK), 82–121 (HHLK…LERR), 125–163 (AHGA…PLMD), 166–205 (QHEE…FELL), 208–247 (PQSG…ATSD), 250–289 (ALRA…VVGS), and 293–332 (HTGE…AVVV). At serine 354 the chain carries Phosphoserine. The segment at 363 to 383 (REEGEDSMAQEEKEETGDDSD) is disordered. Residues 365 to 383 (EGEDSMAQEEKEETGDDSD) show a composition bias toward acidic residues. Threonine 378 is modified (phosphothreonine). Serine 382 bears the Phosphoserine mark.

Belongs to the WD repeat WDR55 family.

The protein resides in the nucleus. It is found in the nucleolus. The protein localises to the cytoplasm. Its function is as follows. Nucleolar protein that acts as a modulator of rRNA synthesis. Plays a central role during organogenesis. The protein is WD repeat-containing protein 55 (WDR55) of Homo sapiens (Human).